The primary structure comprises 308 residues: Transaldolase (308 aa).

Residue Lys-125 is the Schiff-base intermediate with substrate of the active site.

This sequence belongs to the transaldolase family. Type 1 subfamily. As to quaternary structure, homodimer.

Its subcellular location is the cytoplasm. It catalyses the reaction D-sedoheptulose 7-phosphate + D-glyceraldehyde 3-phosphate = D-erythrose 4-phosphate + beta-D-fructose 6-phosphate. The protein operates within carbohydrate degradation; pentose phosphate pathway; D-glyceraldehyde 3-phosphate and beta-D-fructose 6-phosphate from D-ribose 5-phosphate and D-xylulose 5-phosphate (non-oxidative stage): step 2/3. Functionally, transaldolase is important for the balance of metabolites in the pentose-phosphate pathway. The sequence is that of Transaldolase from Pseudomonas putida (strain W619).